Reading from the N-terminus, the 766-residue chain is Dipeptidyl peptidase 4 (766 aa).

Residues 1–6 (MKTPWK) are Cytoplasmic-facing. A helical; Signal-anchor for type II membrane protein transmembrane segment spans residues 7–27 (VLLGLLGIAALVTVITVPVVL). Residues 28–766 (LNKGTDDAAA…HFLKQCFSLP (739 aa)) are Extracellular-facing. N-linked (GlcNAc...) asparagine glycans are attached at residues N85, N92, N150, N179, N219, N229, N279, and N321. Disulfide bonds link C385-C394, C444-C447, and C454-C472. The active-site Charge relay system is S630. The cysteines at positions 649 and 762 are disulfide-linked. N-linked (GlcNAc...) asparagine glycosylation occurs at N685. Active-site charge relay system residues include D708 and H740.

This sequence belongs to the peptidase S9B family. DPPIV subfamily. As to quaternary structure, monomer. Homodimer. Heterodimer with Seprase (FAP). Requires homodimerization for optimal dipeptidyl peptidase activity and T-cell costimulation. Found in a membrane raft complex, at least composed of BCL10, CARD11, DPP4 and IKBKB. Associates with collagen. Interacts with PTPRC; the interaction is enhanced in an interleukin-12-dependent manner in activated lymphocytes. Interacts (via extracellular domain) with ADA; does not inhibit its dipeptidyl peptidase activity. Interacts with CAV1 (via the N-terminus); the interaction is direct. Interacts (via cytoplasmic tail) with CARD11 (via PDZ domain); its homodimerization is necessary for interaction with CARD11. Interacts with IGF2R; the interaction is direct. Interacts with GPC3. Post-translationally, the soluble form (Dipeptidyl peptidase 4 soluble form also named SDPP) derives from the membrane form (Dipeptidyl peptidase 4 membrane form also named MDPP) by proteolytic processing. In terms of processing, N- and O-Glycosylated. Phosphorylated. Mannose 6-phosphate residues in the carbohydrate moiety are necessary for interaction with IGF2R in activated T-cells. Mannose 6-phosphorylation is induced during T-cell activation.

It is found in the secreted. Its subcellular location is the cell membrane. The protein localises to the apical cell membrane. The protein resides in the cell projection. It localises to the invadopodium membrane. It is found in the lamellipodium membrane. Its subcellular location is the cell junction. The protein localises to the membrane raft. It catalyses the reaction Release of an N-terminal dipeptide, Xaa-Yaa-|-Zaa-, from a polypeptide, preferentially when Yaa is Pro, provided Zaa is neither Pro nor hydroxyproline.. Inhibited by GPC3 and diprotin A. Its function is as follows. Cell surface glycoprotein receptor involved in the costimulatory signal essential for T-cell receptor (TCR)-mediated T-cell activation. Acts as a positive regulator of T-cell coactivation, by binding at least ADA, CAV1, IGF2R, and PTPRC. Its binding to CAV1 and CARD11 induces T-cell proliferation and NF-kappa-B activation in a T-cell receptor/CD3-dependent manner. Its interaction with ADA also regulates lymphocyte-epithelial cell adhesion. In association with FAP is involved in the pericellular proteolysis of the extracellular matrix (ECM), the migration and invasion of endothelial cells into the ECM. May be involved in the promotion of lymphatic endothelial cells adhesion, migration and tube formation. When overexpressed, enhanced cell proliferation, a process inhibited by GPC3. Also acts as a serine exopeptidase with a dipeptidyl peptidase activity that regulates various physiological processes by cleaving peptides in the circulation, including many chemokines, mitogenic growth factors, neuropeptides and peptide hormones such as brain natriuretic peptide 32. Removes N-terminal dipeptides sequentially from polypeptides having unsubstituted N-termini provided that the penultimate residue is proline. In Sus scrofa (Pig), this protein is Dipeptidyl peptidase 4 (DPP4).